The chain runs to 764 residues: Thyrotropin receptor (764 aa).

Residues 1 to 20 form the signal peptide; it reads MRPPPLLHLALLLALPRSLG. At 21–413 the chain is on the extracellular side; that stretch reads GKGCPSPPCE…EFNPCEDIMG (393 aa). A disulfide bridge connects residues Cys-31 and Cys-41. Asn-77 and Asn-99 each carry an N-linked (GlcNAc...) asparagine glycan. 6 LRR repeats span residues 125–149, 150–174, 176–199, 201–223, 225–248, and 250–271; these read LPLLKFLGIFNTGLGVFPDVTKVYS, TDVFFILEITDNPYMASIPANAFQG, CNETLTLKLYNNGFTSIQGHAFNG, KLDAVYLNKNKYLSAIDKDAFGG, YSGPTLLDVSYTSVTALPSKGLEH, and KELIARNTWTLKKLPLSLSFLH. N-linked (GlcNAc...) asparagine glycosylation is found at Asn-177 and Asn-198. N-linked (GlcNAc...) asparagine glycosylation is present at Asn-302. Position 385 is a sulfotyrosine (Tyr-385). A helical membrane pass occupies residues 414-441; that stretch reads YKFLRIVVWFVSLLALLGNVFVLIVLLT. The Cytoplasmic segment spans residues 442-450; that stretch reads SHYKLTVPR. The helical transmembrane segment at 451 to 473 threads the bilayer; the sequence is FLMCNLAFADFCMGMYLLLIASV. Residues 474–494 are Extracellular-facing; the sequence is DLYTHSEYYNHAIDWQTGPGC. Cys-494 and Cys-569 form a disulfide bridge. Residues 495–517 form a helical membrane-spanning segment; sequence NTAGFFTVFASELSVYTLTVITL. The Cytoplasmic segment spans residues 518-537; that stretch reads ERWYAITFAMRLDRKIRLRH. Residues 538-560 traverse the membrane as a helical segment; the sequence is AYAIMVGGWVCCFLLALLPLVGI. The Extracellular portion of the chain corresponds to 561 to 580; it reads SSYAKVSICLPMDTETPLAL. The chain crosses the membrane as a helical span at residues 581 to 602; it reads AYIILVLLLNIVAFIIVCSCYV. The Cytoplasmic segment spans residues 603 to 625; the sequence is KIYITVRNPQYNPGDKDTKIAKR. A helical membrane pass occupies residues 626 to 649; sequence MAVLIFTDFMCMAPISFYALSALM. Topologically, residues 650-660 are extracellular; sequence NKPLITVTNSK. A helical membrane pass occupies residues 661 to 682; the sequence is ILLVLFYPLNSCANPFLYAIFT. Over 683-764 the chain is Cytoplasmic; that stretch reads KAFQRDVFIL…ISKEYNQTVL (82 aa). A PDZ-binding motif is present at residues 762 to 764; it reads TVL.

The protein belongs to the G-protein coupled receptor 1 family. FSH/LSH/TSH subfamily. In terms of assembly, interacts with heterodimer GPHA2:GPHB5; this interaction stimulates cAMP production. Interacts (via the PDZ-binding motif) with SCRIB; regulates TSHR trafficking and function. In terms of processing, glycosylated. Post-translationally, sulfated. Sulfation on Tyr-385 plays a role in thyrotropin receptor binding and activation.

Its subcellular location is the cell membrane. The protein resides in the basolateral cell membrane. Receptor for the thyroid-stimulating hormone (TSH) or thyrotropin. Also acts as a receptor for the heterodimeric glycoprotein hormone (GPHA2:GPHB5) or thyrostimulin. The activity of this receptor is mediated by G proteins which activate adenylate cyclase. Plays a central role in controlling thyroid cell metabolism. The chain is Thyrotropin receptor (TSHR) from Canis lupus familiaris (Dog).